Here is a 631-residue protein sequence, read N- to C-terminus: 1-deoxy-D-xylulose-5-phosphate synthase (631 aa).

Thiamine diphosphate is bound by residues histidine 87 and 128 to 130 (GHS). Aspartate 159 provides a ligand contact to Mg(2+). Thiamine diphosphate-binding positions include 160–161 (GA), asparagine 188, phenylalanine 295, and glutamate 377. Mg(2+) is bound at residue asparagine 188.

Belongs to the transketolase family. DXPS subfamily. Homodimer. Mg(2+) serves as cofactor. Thiamine diphosphate is required as a cofactor.

The catalysed reaction is D-glyceraldehyde 3-phosphate + pyruvate + H(+) = 1-deoxy-D-xylulose 5-phosphate + CO2. Its pathway is metabolic intermediate biosynthesis; 1-deoxy-D-xylulose 5-phosphate biosynthesis; 1-deoxy-D-xylulose 5-phosphate from D-glyceraldehyde 3-phosphate and pyruvate: step 1/1. In terms of biological role, catalyzes the acyloin condensation reaction between C atoms 2 and 3 of pyruvate and glyceraldehyde 3-phosphate to yield 1-deoxy-D-xylulose-5-phosphate (DXP). The sequence is that of 1-deoxy-D-xylulose-5-phosphate synthase from Pseudomonas putida (strain ATCC 700007 / DSM 6899 / JCM 31910 / BCRC 17059 / LMG 24140 / F1).